A 2294-amino-acid chain; its full sequence is Protein Ycf2 (2294 aa).

1648–1655 serves as a coordination point for ATP; that stretch reads GSIGTGRS.

This sequence belongs to the Ycf2 family.

The protein resides in the plastid. It localises to the chloroplast stroma. Functionally, probable ATPase of unknown function. Its presence in a non-photosynthetic plant (Epifagus virginiana) and experiments in tobacco indicate that it has an essential function which is probably not related to photosynthesis. This is Protein Ycf2 from Arabidopsis thaliana (Mouse-ear cress).